A 241-amino-acid chain; its full sequence is Phycocyanobilin:ferredoxin oxidoreductase (241 aa).

This sequence belongs to the HY2 family.

It catalyses the reaction (2R,3Z)-phycocyanobilin + 4 oxidized [2Fe-2S]-[ferredoxin] = biliverdin IXalpha + 4 reduced [2Fe-2S]-[ferredoxin] + 4 H(+). Catalyzes the four-electron reduction of biliverdin IX-alpha (2-electron reduction at both the A and D rings); the reaction proceeds via an isolatable 2-electron intermediate, 181,182-dihydrobiliverdin. This Prochlorococcus marinus (strain MIT 9312) protein is Phycocyanobilin:ferredoxin oxidoreductase.